The following is a 321-amino-acid chain: MTISVPQLDCPLSRPVHPEGERADAYAVEWLRGVGLMADEADAAPVLAVGLGRLAACYVDENASWDTLAFMTILMAWYAEYDDRAIDSTGAIDGLTDAEVAELHRALGEILRDRPAPDPSDPVQRGLADVWRTLNGLASDWDRAAFVDTTLRYFEANRYERVNIRRGIPPTPSAHIGMRRHGGHVYGMYILGAAVNGYRPERRVLDHAAVRELETLAANYTSWANDLHSFAREHRMGQVNNLVWSVHHHEGLTFQQAADRVADLCDKELAAYLELRQTLPELGIPLTGATGRHVRFLEDMMWSMVDWSARSARYDVVPEAA.

Residues Asp-82, Asn-225, Ser-229, and Glu-233 each contribute to the Mg(2+) site. The DDxx(x)D/E motif signature appears at Asp-82–Asp-87. An NDxxSxxxD/E motif motif is present at residues Asn-225–Glu-233.

The protein belongs to the terpene synthase family. Mg(2+) serves as cofactor.

It catalyses the reaction (2E,6E,10E)-geranylgeranyl diphosphate = hydropyrene + diphosphate. The catalysed reaction is (2E,6E,10E)-geranylgeranyl diphosphate + H2O = hydropyrenol + diphosphate. The enzyme catalyses (2E,6E,10E)-geranylgeranyl diphosphate = isoelisabethatriene + diphosphate. It participates in secondary metabolite biosynthesis; terpenoid biosynthesis. Terpene synthase that catalyzes the conversion of geranylgeranyl diphosphate (GGPP) into a mixture of diterpenes, including hydropyrene (HP), hydropyrenol (HPol), isoelisabethatriene and traces of isoelisabethatriene B. Hydropyrene is the main product. Some other diterpenoids are also produced in very low quantities. This Streptomyces clavuligerus protein is Hydropyrene synthase.